Reading from the N-terminus, the 526-residue chain is MVVALSFPEADPALSSPDAPELHQDEAQVVEELTVNGKHSLSWESPQGPGCGLQNTGNSCYLNAALQCLTHTPPLADYMLSQEHSQTCCSPEGCKLCAMEALVTQSLLHSHSGDVMKPSHILTSAFHKHQQEDAHEFLMFTLETMHESCLQVHRQSKPTSEDSSPIHDIFGGWWRSQIKCLLCQGTSDTYDRFLDIPLDISSAQSVKQALWDTEKSEELCGDNAYYCGKCRQKMPASKTLHVHIAPKVLMVVLNRFSAFTGNKLDRKVSYPEFLDLKPYLSEPTGGPLPYALYAVLVHDGATSHSGHYFCCVKAGHGKWYKMDDTKVTRCDVTSVLNENAYVLFYVQQANLKQVSIDMPEGRINEVLDPEYQLKKSRRKKHKKKSPFTEDLGEPCENRDKRAIKETSLGKGKVLQEVNHKKAGQKHGNTKLMPQKQNHQKAGQNLRNTEVELDLPADAIVIHQPRSTANWGRDSPDKENQPLHNADRLLTSQGPVNTWQLCRQEGRRRSKKGQNKNKQGQRLLLVC.

The tract at residues 1–21 is disordered; it reads MVVALSFPEADPALSSPDAPE. The 298-residue stretch at 51–348 folds into the USP domain; it reads CGLQNTGNSC…NAYVLFYVQQ (298 aa). The active-site Nucleophile is the C60. The active-site Proton acceptor is the H307. The span at 374-385 shows a compositional bias: basic residues; that stretch reads KKSRRKKHKKKS. 2 disordered regions span residues 374-394 and 465-494; these read KKSRRKKHKKKSPFTEDLGEP and RSTANWGRDSPDKENQPLHNADRLLTSQGP. The span at 473–486 shows a compositional bias: basic and acidic residues; that stretch reads DSPDKENQPLHNAD.

This sequence belongs to the peptidase C19 family. Polyubiquitinated; ubiquitination leads to its subsequent degradation. As to expression, expressed in hematopoietic progenitor cell lines Ba/F3 and FDCP1. Not detected in brain, lung, liver, kidney, thymus, spleen and bone marrow.

The enzyme catalyses Thiol-dependent hydrolysis of ester, thioester, amide, peptide and isopeptide bonds formed by the C-terminal Gly of ubiquitin (a 76-residue protein attached to proteins as an intracellular targeting signal).. Its function is as follows. Deubiquitinating enzyme that removes conjugated ubiquitin from specific proteins to regulate different cellular processes. Has deubiquitinating enzyme activity for DNAH5, suggesting a role in the regulation of DNAH5 degradation by the ubiquitin-proteasome pathway. Has growth-suppressing activity; induces arrest in G1 phase upon controlled expression. This chain is Ubiquitin carboxyl-terminal hydrolase 17-like protein A (Usp17la), found in Mus musculus (Mouse).